Reading from the N-terminus, the 935-residue chain is Disintegrin and metalloproteinase domain-containing protein 22 (935 aa).

An N-terminal signal peptide occupies residues 1–24; it reads MHINGGPLASWICCVIGSIHLAHA. Positions 25-227 are excised as a propeptide; that stretch reads STRPENGGTS…QQTRSQRKKR (203 aa). Residues N167 and N210 are each glycosylated (N-linked (GlcNAc...) asparagine). At 228 to 736 the chain is on the extracellular side; it reads QTRRYPRNVE…NRDEGVISTN (509 aa). Residues 241–440 form the Peptidase M12B domain; that stretch reads KYVELMIVND…GGGACLFNKP (200 aa). 17 cysteine pairs are disulfide-bonded: C351-C435, C394-C419, C396-C403, C449-C479, C460-C476, C462-C468, C475-C496, C487-C493, C492-C518, C505-C525, C512-C544, C537-C549, C556-C607, C571-C637, C585-C595, C602-C665, and C659-C670. The Disintegrin domain maps to 446 to 533; that stretch reads PPECGNGFVE…QCPANIHKLD (88 aa). An N-linked (GlcNAc...) asparagine glycan is attached at N521. N609 and N636 each carry an N-linked (GlcNAc...) asparagine glycan. N-linked (GlcNAc...) asparagine glycosylation is present at N677. Residues 677–713 form the EGF-like domain; that stretch reads NFSTCLGSTNKICSGHGVCSNEVRCICDRFWTGEDCS. Intrachain disulfides connect C681/C695, C689/C701, and C703/C712. A helical membrane pass occupies residues 737–757; it reads IIIGAIAGTILVLALVLGITA. The Cytoplasmic portion of the chain corresponds to 758-935; sequence WGYKNYRRER…QSARLWETSI (178 aa). Residues 850–935 are disordered; it reads VSDVCENGRP…QSARLWETSI (86 aa). Over residues 859–870 the composition is skewed to polar residues; that stretch reads PRSNSWQGNVTS. The span at 871-882 shows a compositional bias: basic residues; sequence SRKKLRGKRFRP. A compositionally biased stretch (low complexity) spans 891 to 906; it reads SPAKSPSSSTGSIASS.

In terms of processing, the precursor is cleaved by a furin endopeptidase. In terms of tissue distribution, low levels in adult tissues. Not detected in developing embryos.

The protein localises to the cell membrane. In terms of biological role, probable ligand for integrin in the brain. This is a non catalytic metalloprotease-like protein. The protein is Disintegrin and metalloproteinase domain-containing protein 22 (adam22) of Xenopus laevis (African clawed frog).